The sequence spans 596 residues: MAEKKEFVVGIDLGTTNSVIAWMKPDGTVEVIPNAEGSRITPSVVAFTKSGEILVGEPAKRQMILNPERTIKSIKRKMGTDYKVRIDDKEYTPQEISAFILKKLKKDAEAYLGGEIKKAVITCPAYFNDAQRQATKEAGIIAGLEVLRIINEPTAAALAYGLDKAGKEQKVLVYDLGGGTFDVSILEIGDGVIEVIATAGNNHLGGDDFDQRLIDWMAEEFKKQHGIDLREDRQALQRLRDAAEKAKIELSTKMETDVSLPFIAVSPSGQPLHLEMRITRSLFESLTRDLVEMTRGPIEQALNDAKLSPQDIDEIILVGGMTRVPMVQRFIKEFFGKEPNKSVNPDEAVAIGAAIQAAILAGTEGAKGRDIVLVDVTPLTLGIEVKGGLFEPIIPRNTKIPVRKSKIFTTVEDGQTEVEIRVYQGERPIARENIFLGSFKLVGIPPAPRGVPQIEVTFDIDSDGIVHVSAKDLGSGKEQSMVVTGRHKLSEEDIKRMIEDAKRYEEQDKRLKEEIELKNRADDLAYSVEKTLREHGDKIPADLKSKLENMIKELRDAINRNDIPRVKMLFDDLQKESMKIGEYLYKSATGGEATNQ.

Position 180 is a phosphothreonine; by autocatalysis (Thr-180).

Belongs to the heat shock protein 70 family.

Acts as a chaperone. The sequence is that of Chaperone protein DnaK from Thermotoga neapolitana (strain ATCC 49049 / DSM 4359 / NBRC 107923 / NS-E).